The sequence spans 482 residues: Hydroxymethylglutaryl-CoA synthase A (482 aa).

The Proton donor/acceptor role is filled by Glu85. Cys119 serves as the catalytic Acyl-thioester intermediate. Residues Cys119, Thr161, Ser211, His249, Lys258, Asn325, and Ser358 each contribute to the (3S)-3-hydroxy-3-methylglutaryl-CoA site. The active-site Proton donor/acceptor is His249.

It belongs to the thiolase-like superfamily. HMG-CoA synthase family.

The catalysed reaction is acetoacetyl-CoA + acetyl-CoA + H2O = (3S)-3-hydroxy-3-methylglutaryl-CoA + CoA + H(+). The protein operates within metabolic intermediate biosynthesis; (R)-mevalonate biosynthesis; (R)-mevalonate from acetyl-CoA: step 2/3. Functionally, condenses acetyl-CoA with acetoacetyl-CoA to form HMG-CoA, which is the substrate for HMG-CoA reductase. This Dictyostelium discoideum (Social amoeba) protein is Hydroxymethylglutaryl-CoA synthase A (hgsA).